The primary structure comprises 101 residues: Osteocalcin (101 aa).

A signal peptide spans 1–18 (MKLAIVLLLLGLAVLCLG). Residues 19 to 52 (GKDSQHSASAGDSRSSEAFISRQDSANFARRHKR) constitute a propeptide that is removed on maturation. Residues 53–99 (SYRYNVARGAAVTSPLESQREVCELNPDCDELADHIGFQEAYRRFYG) enclose the Gla domain. Positions 69, 73, 76, and 82 each coordinate Ca(2+). 4-carboxyglutamate occurs at positions 69, 73, and 76. Residues Cys-75 and Cys-81 are joined by a disulfide bond.

The protein belongs to the osteocalcin/matrix Gla protein family. Post-translationally, gamma-carboxyglutamate residues are formed by vitamin K dependent carboxylation by GGCX. These residues are essential for the binding of calcium.

Its subcellular location is the secreted. The carboxylated form is one of the main organic components of the bone matrix, which constitutes 1-2% of the total bone protein. The carboxylated form binds strongly to apatite and calcium. The polypeptide is Osteocalcin (bglap) (Xenopus tropicalis (Western clawed frog)).